Consider the following 134-residue polypeptide: Cytochrome b (134 aa).

3 helical membrane-spanning segments follow: residues 33 to 53 (FGSLLGVCLGVQILTGLFLAM), 77 to 98 (WLLRYLHANGASMFFICLYLHV), and 113 to 133 (WNIGILLLFAVMATDFMGYVL). His-83 and His-97 together coordinate heme b.

This sequence belongs to the cytochrome b family. The cytochrome bc1 complex contains 11 subunits: 3 respiratory subunits (MT-CYB, CYC1 and UQCRFS1), 2 core proteins (UQCRC1 and UQCRC2) and 6 low-molecular weight proteins (UQCRH/QCR6, UQCRB/QCR7, UQCRQ/QCR8, UQCR10/QCR9, UQCR11/QCR10 and a cleavage product of UQCRFS1). This cytochrome bc1 complex then forms a dimer. It depends on heme b as a cofactor.

It is found in the mitochondrion inner membrane. In terms of biological role, component of the ubiquinol-cytochrome c reductase complex (complex III or cytochrome b-c1 complex) that is part of the mitochondrial respiratory chain. The b-c1 complex mediates electron transfer from ubiquinol to cytochrome c. Contributes to the generation of a proton gradient across the mitochondrial membrane that is then used for ATP synthesis. The sequence is that of Cytochrome b (MT-CYB) from Sturnira tildae (Tilda's yellow-shouldered bat).